We begin with the raw amino-acid sequence, 495 residues long: Serine/threonine-protein phosphatase 2A regulatory subunit sur-6 (495 aa).

The interval 1–27 is disordered; that stretch reads MVMEVDEPAVAATTSQNQPQEHANDFD. Over residues 12–21 the composition is skewed to polar residues; sequence ATTSQNQPQE. WD repeat units lie at residues 64–103, 130–171, 215–253, 264–304, 323–361, and 378–419; these read TEADVISCVEFSHDGEYLATGDKGGRVVIFQRDQSGKYVK, EIDE…RKIG, AHTYHVNSISVNSDQETFLSADDLRVNLWNLEITNESFN, ELTE…LCDA, EIIASVSDVKFSHNGRYLLTRDYLTVKVWDLNMESQPVE, and ENDS…DAKT. A disordered region spans residues 439-459; sequence SAKRKRNNLSSSGETTEEDLS. A WD 7 repeat occupies 464 to 495; sequence QFDRKILHTAWHPKDNIIALAATNNLYIFSDV.

This sequence belongs to the phosphatase 2A regulatory subunit B family. Part of a complex consisting of a common heterodimeric core enzyme, composed of catalytic subunit let-92 and constant regulatory subunit paa-1, that associates with a variety of regulatory subunits which confer distinct properties to the holoenzyme. Interacts with let-92.

The protein localises to the cytoplasm. Probable regulatory subunit of serine/threonine phosphatase let-92. Together with let-92 and constant regulatory subunit paa-1, positively regulates centriole duplication during early embryonic cell divisions by preventing the degradation of sas-5 and kinase zyg-1. In addition, during vulva development, may play a role with phosphatase let-92 and regulatory subunit paa-1 in the induction of vulva cell precursors by positively regulating let-60/Ras-MAP kinase signaling, probably by promoting lin-45 activation. In intestinal epithelial cells, may play a role in the late secretory pathway probably by regulating the exocyst, a protein complex involved in targeting secretory vesicles to the plasma membrane. This Caenorhabditis elegans protein is Serine/threonine-protein phosphatase 2A regulatory subunit sur-6.